Here is a 312-residue protein sequence, read N- to C-terminus: Methionyl-tRNA formyltransferase (312 aa).

Residue 107-110 coordinates (6S)-5,6,7,8-tetrahydrofolate; the sequence is SLLP.

It belongs to the Fmt family.

It catalyses the reaction L-methionyl-tRNA(fMet) + (6R)-10-formyltetrahydrofolate = N-formyl-L-methionyl-tRNA(fMet) + (6S)-5,6,7,8-tetrahydrofolate + H(+). In terms of biological role, attaches a formyl group to the free amino group of methionyl-tRNA(fMet). The formyl group appears to play a dual role in the initiator identity of N-formylmethionyl-tRNA by promoting its recognition by IF2 and preventing the misappropriation of this tRNA by the elongation apparatus. The protein is Methionyl-tRNA formyltransferase of Endomicrobium trichonymphae.